A 142-amino-acid chain; its full sequence is Large ribosomal subunit protein uL11 (142 aa).

This sequence belongs to the universal ribosomal protein uL11 family. Part of the ribosomal stalk of the 50S ribosomal subunit. Interacts with L10 and the large rRNA to form the base of the stalk. L10 forms an elongated spine to which L12 dimers bind in a sequential fashion forming a multimeric L10(L12)X complex. Post-translationally, one or more lysine residues are methylated.

Its function is as follows. Forms part of the ribosomal stalk which helps the ribosome interact with GTP-bound translation factors. This is Large ribosomal subunit protein uL11 from Vibrio vulnificus (strain CMCP6).